The following is a 1774-amino-acid chain: Collagen alpha-1(XVIII) chain (1774 aa).

A signal peptide spans 1–26; sequence MAPDPSRRLCLLLLLLLSCRLVPASA. The tract at residues 27 to 785 is nonhelical region 1 (NC1); the sequence is DGNSLSPLNP…QNPGRGLIKG (759 aa). Disordered regions lie at residues 47–113 and 218–269; these read DSLE…TPAV and LPPF…LEGK. Composition is skewed to polar residues over residues 55–87 and 244–256; these read KPQNSSPVQSTENPTTHVVPQDGLTEQQTTPAS and LSSSTDQGSSWGN. Residues N354 and N361 are each glycosylated (N-linked (GlcNAc...) asparagine). Positions 365–482 constitute an FZ domain; sequence TSTSRCLPLP…SQEDGYCVFI (118 aa). Intrachain disulfides connect C370-C433, C380-C426, C417-C455, C444-C479, and C448-C468. Positions 522-704 constitute a Laminin G-like domain; it reads GPDSNSGQVA…EDRASGDFGS (183 aa). N-linked (GlcNAc...) asparagine glycosylation is present at N585. Positions 681–1458 are disordered; that stretch reads RVSPVHCLDE…PPGPPGAMGA (778 aa). The segment covering 708–717 has biased composition (basic and acidic residues); it reads ESSKSHKEDT. Position 730 is a phosphothreonine (T730). The interval 786–812 is triple-helical region 1 (COL1); that stretch reads GMKGQKGEPGAQGPPGPAGPQGPAGPV. The segment covering 809 to 824 has biased composition (low complexity); that stretch reads AGPVVQSPNSQPVPGA. Residues 813-822 form a nonhelical region 2 (NC2) region; that stretch reads VQSPNSQPVP. Residues 823-878 form the Collagen-like 1 domain; sequence GAQGPPGPQGPPGKDGTPGRDGEPGDPGEDGRPGDTGPQGFPGTPGDVGPKGEKGD. Positions 823 to 896 are triple-helical region 2 (COL2); sequence GAQGPPGPQG…PGPPGPPGPS (74 aa). Residues 839 to 855 show a composition bias toward basic and acidic residues; that stretch reads TPGRDGEPGDPGEDGRP. Over residues 884–895 the composition is skewed to pro residues; sequence RGPPGPPGPPGP. A nonhelical region 3 (NC3) region spans residues 897–920; sequence FRQDKLTFIDMEGSGFSGDIESLR. S910 carries O-linked (Xyl...) (chondroitin sulfate) serine glycosylation. Residues 921 to 1042 are triple-helical region 3 (COL3); sequence GPRGFPGPPG…PGPPGPPGPG (122 aa). The segment covering 925–935 has biased composition (pro residues); that stretch reads FPGPPGPPGVP. Residue N947 is glycosylated (N-linked (GlcNAc...) asparagine). A compositionally biased stretch (low complexity) spans 951–963; that stretch reads APGPAGLPGVPGK. Collagen-like domains lie at 953–1007 and 1008–1041; these read GPAG…GSKG and DLGPIGMPGKSGLAGSPGPVGPPGPPGPPGPPGP. Pro residues-rich tracts occupy residues 967 to 982 and 1026 to 1041; these read PGFPGPPGPPGPPGKE and PVGPPGPPGPPGPPGP. A nonhelical region 4 (NC4) region spans residues 1043-1065; that stretch reads FAAGFDDMEGSGIPLWTTARSSD. Collagen-like domains are found at residues 1066-1117, 1118-1147, 1162-1202, and 1216-1264; these read GLQG…GPKG, EKGMPGEKGNPGKDGVGRPGLPGPPGPPGP, PGPE…GEPG, and QKGA…EPGD. The triple-helical region 4 (COL4) stretch occupies residues 1066–1148; it reads GLQGPPGSPG…PGPPGPPGPV (83 aa). Over residues 1138–1147 the composition is skewed to pro residues; sequence LPGPPGPPGP. The tract at residues 1149-1162 is nonhelical region 5 (NC5); it reads IYVSSEDKAIVSTP. The interval 1163 to 1204 is triple-helical region 5 (COL5); that stretch reads GPEGKPGYAGFPGPAGPKGDLGSKGEQGLPGPKGEKGEPGTI. The tract at residues 1205-1217 is nonhelical region 6 (NC6); sequence FSPDGRALGHPQK. Residues 1218–1290 are triple-helical region 6 (COL6); the sequence is GAKGEPGFRG…PGPPGPPGMP (73 aa). The segment covering 1275-1289 has biased composition (pro residues); sequence PGPPGPPGPPGPPGM. Positions 1291–1300 are nonhelical region 7 (NC7); sequence IYDSNAFVES. Positions 1301–1317 are enriched in low complexity; that stretch reads GRPGLPGQQGVQGPSGP. The interval 1301 to 1333 is triple-helical region 7 (COL7); the sequence is GRPGLPGQQGVQGPSGPKGDKGEVGPPGPPGQF. The nonhelical region 8 (NC8) stretch occupies residues 1334–1345; sequence PIDLFHLEAEMK. The segment covering 1338–1362 has biased composition (basic and acidic residues); the sequence is FHLEAEMKGDKGDRGDAGQKGERGE. The triple-helical region 8 (COL8) stretch occupies residues 1346–1369; that stretch reads GDKGDRGDAGQKGERGEPGAPGGG. A Cell attachment site motif is present at residues 1351-1353; that stretch reads RGD. Positions 1370–1376 are nonhelical region 9 (NC9); it reads FFSSSVP. 4 stretches are compositionally biased toward pro residues: residues 1376–1388, 1398–1407, 1418–1431, and 1441–1453; these read PGPPGPPGYPGIP, PPGPPGPQGP, PPGPPGPPGPPSFP, and PGPPGPPGPPGPP. A triple-helical region 9 (COL9) region spans residues 1377-1428; sequence GPPGPPGYPGIPGPKGESIRGPPGPPGPQGPPGIGYEGRQGPPGPPGPPGPP. Residues 1429–1441 form a nonhelical region 10 (NC10) region; that stretch reads SFPGPHRQTVSVP. Residues 1442-1459 are triple-helical region 10 (COL10); it reads GPPGPPGPPGPPGAMGAS. A nonhelical region 11 (NC11) region spans residues 1460-1774; sequence AGQVRIWATY…ENSFMTSFSK (315 aa). The segment at 1474-1519 is non-collagenous domain 1 association domain; sequence DKIREVPEGWLIFVAEREELYVRVRNGFRKVLLEARTALPRGTGNE. The non-collagenous domain 1 hinge region stretch occupies residues 1520–1590; sequence VAALQPPLVQ…PPARPTLSLA (71 aa). Positions 1591, 1593, 1595, 1601, and 1666 each coordinate Zn(2+). 2 disulfides stabilise this stretch: C1623-C1763 and C1725-C1755.

This sequence belongs to the multiplexin collagen family. As to quaternary structure, forms homotrimers. Recombinant non-collagenous domain 1 has stronger affinity to NID1, HSPG2 and laminin-1:NID1 complex and lower affinity to FBLN1 and FBLN2 than endostatin. Monomeric. Interacts with KDR/VEGFR2. Interacts with the ITGA5:ITGB1 complex. Interacts with NID1, HSPG2, laminin-1:NID1 complex, FBLN1 and FBLN2. Prolines at the third position of the tripeptide repeating unit (G-X-Y) of the triple-helical regions are hydroxylated. In terms of processing, undergoes proteolytic processing by CTSL/cathepsin-L and elastase-like proteases to generate both non-collagenous domain 1 trimers and endostatin monomers. In tissue extracts (brain, skeletal muscle, heart, kidney, testis and liver) predominantly bands of approximately 38 kDa are detected; recombinant non-collagenous domain 1 shows similar mobility. In vitro, several proteolytic cleavage sites in the non-collagenous domain 1 hinge region generating different endostatin-like peptides are reported. In terms of tissue distribution, expressed in liver, kidney, lung, skeletal muscle and testis.

The protein resides in the secreted. Its subcellular location is the extracellular space. It localises to the extracellular matrix. It is found in the basement membrane. In terms of biological role, probably plays a major role in determining the retinal structure as well as in the closure of the neural tube. Its function is as follows. May regulate extracellular matrix-dependent motility and morphogenesis of endothelial and non-endothelial cells; the function requires homotrimerization and implicates MAPK signaling. Potently inhibits endothelial cell proliferation and angiogenesis. May inhibit angiogenesis by binding to the heparan sulfate proteoglycans involved in growth factor signaling. Inhibits VEGFA isoform VEGF165-induced endothelial cell proliferation and migration. Seems to inhibit VEGFA-mediated signaling by blocking the interaction of VEGFA to its receptor KDR/VEGFR2. Modulates endothelial cell migration in an integrin-dependent manner implicating integrin ITGA5:ITGB1 and to a lesser extent ITGAV:ITGB3 and ITGAV:ITGB5. May negatively regulate the activity of homotrimeric non-collagenous domain 1. In Mus musculus (Mouse), this protein is Collagen alpha-1(XVIII) chain.